Reading from the N-terminus, the 200-residue chain is Putative 3-methyladenine DNA glycosylase (200 aa).

It belongs to the DNA glycosylase MPG family.

The chain is Putative 3-methyladenine DNA glycosylase from Shouchella clausii (strain KSM-K16) (Alkalihalobacillus clausii).